Reading from the N-terminus, the 1431-residue chain is Caskin-1 (1431 aa).

6 ANK repeats span residues 48-77, 81-110, 114-143, 147-176, 188-217, and 220-249; these read DGFSALHHAALNGNTELISLLLEAQAAVDI, KGMRPLHYAAWQGRKEPMKLVLKAGSAVNV, EGHIPLHLAAQHGHYDVSEMLLQHQSNPCM, SGKTPLDLACEFGRVGVVQLLLSSNMCAAL, NGTSPLHLAAKNGHIDIIRLLLQAGIDINR, and KSGTALHEAALCGKTEVVRLLLDSGINAQV. A Phosphotyrosine modification is found at Y253. In terms of domain architecture, SH3 spans 281-347; that stretch reads SAALQVRATK…PSSLGEAIVK (67 aa). The tract at residues 348-372 is disordered; the sequence is RAGSRTGSEPSPPQGGGSLGPSAPP. The residue at position 358 (S358) is a Phosphoserine. The tract at residues 375–471 is CASK-binding; sequence IWVLRKPFAG…PKKLESASAS (97 aa). R398 bears the Omega-N-methylarginine mark. The segment covering 420 to 430 has biased composition (polar residues); sequence SQKSVSESSPG. Positions 420–471 are disordered; that stretch reads SQKSVSESSPGDSPVKPPEGSSGAARSQPPAAHAGQVYGEQPPKKLESASAS. 2 positions are modified to phosphoserine: S423 and S432. SAM domains are found at residues 476 to 539 and 545 to 609; these read KSAE…LNIP and HKPA…LAEL. 2 positions are modified to phosphoserine: S637 and S650. Residues 669-679 show a composition bias toward low complexity; sequence LSGPAEAGAAA. 2 disordered regions span residues 669-1000 and 1016-1041; these read LSGP…TGSA and GGGGRAIRRPPEGHPTPRPASPEPGR. A compositionally biased stretch (polar residues) spans 692–712; sequence RTTSRESSLSGRARHISSSQE. Phosphoserine occurs at positions 723 and 728. Position 741 is a phosphothreonine (T741). S791 is subject to Phosphoserine. A compositionally biased stretch (pro residues) spans 848-860; that stretch reads PPAPGPAPPPVPA. Phosphoserine is present on residues S891, S893, and S989. Positions 1028 to 1037 are enriched in pro residues; sequence GHPTPRPASP. T1067 bears the Phosphothreonine mark. S1069 carries the phosphoserine modification. 2 disordered regions span residues 1072-1372 and 1389-1410; these read VTGL…RQKL and KIRQEDGQGPRPSSIEEKSTGS. Over residues 1148 to 1160 the composition is skewed to basic and acidic residues; that stretch reads DTVKRRPKAKEPD. Over residues 1191–1215 the composition is skewed to pro residues; that stretch reads PELPPPPPPAEPPPADLMQLPPLPL. Polar residues predominate over residues 1236–1247; the sequence is QPVSKIQGSPTP. S1259 carries the post-translational modification Phosphoserine. Position 1268 is a phosphothreonine (T1268). The segment covering 1268–1283 has biased composition (pro residues); it reads TPPPVSPKPPPPPTAP. Composition is skewed to low complexity over residues 1284 to 1299, 1309 to 1327, and 1345 to 1359; these read KPAKALAGLQSSSATP, PPAALIKPASSPPSQSASP, and PRAAASVVSGPPVAS. S1363 carries the phosphoserine modification. The segment covering 1389–1407 has biased composition (basic and acidic residues); that stretch reads KIRQEDGQGPRPSSIEEKS.

Binds the CaM kinase domain of CASK. Forms a ternary complex with CASK and LIN7A, LIN7B or LIN7C. Competes with APBA1 that forms a similar complex with CASK and LIN7 proteins. The tripartite complex CASKIN1/CASK/LIN7(A/B/C) binds the cytoplasmic tail of NRXN1. Polymerizes, via the tandem SAM domains, to form long, 8 nM wide fibers, upon which other proteins can assemble.

The protein localises to the cytoplasm. May link the scaffolding protein CASK to downstream intracellular effectors. The protein is Caskin-1 (Caskin1) of Mus musculus (Mouse).